The primary structure comprises 270 residues: 5'-AMP-activated protein kinase subunit beta-1 (270 aa).

A disordered region spans residues 1–44; that stretch reads MGNTSSERAALDRQGGHKTPRRDSSGGSKDGDRPKILMDSPEDA. Gly2 carries the N-myristoyl glycine lipid modification. The residue at position 4 (Thr4) is a Phosphothreonine. Ser5 and Ser6 each carry phosphoserine. The span at 9–36 shows a compositional bias: basic and acidic residues; that stretch reads AALDRQGGHKTPRRDSSGGSKDGDRPKI. A Phosphothreonine modification is found at Thr19. Phosphoserine; by autocatalysis is present on residues Ser24 and Ser25. Phosphoserine is present on residues Ser40, Ser96, and Ser101. The segment at 68–163 is glycogen-binding domain; that stretch reads EVNDKAPAQA…QVKKTDFEVF (96 aa). Ser108 bears the Phosphoserine; by autocatalysis mark. Thr148 carries the phosphothreonine modification. Residue Ser182 is modified to Phosphoserine. Lys201 bears the N6-succinyllysine mark.

The protein belongs to the 5'-AMP-activated protein kinase beta subunit family. AMPK is a heterotrimer of an alpha catalytic subunit (PRKAA1 or PRKAA2), a beta (PRKAB1 or PRKAB2) and a gamma non-catalytic subunits (PRKAG1, PRKAG2 or PRKAG3). Interacts with FNIP1 and FNIP2. Post-translationally, phosphorylated when associated with the catalytic subunit (PRKAA1 or PRKAA2). Phosphorylated by ULK1; leading to negatively regulate AMPK activity and suggesting the existence of a regulatory feedback loop between ULK1 and AMPK.

In terms of biological role, non-catalytic subunit of AMP-activated protein kinase (AMPK), an energy sensor protein kinase that plays a key role in regulating cellular energy metabolism. In response to reduction of intracellular ATP levels, AMPK activates energy-producing pathways and inhibits energy-consuming processes: inhibits protein, carbohydrate and lipid biosynthesis, as well as cell growth and proliferation. AMPK acts via direct phosphorylation of metabolic enzymes, and by longer-term effects via phosphorylation of transcription regulators. Also acts as a regulator of cellular polarity by remodeling the actin cytoskeleton; probably by indirectly activating myosin. Beta non-catalytic subunit acts as a scaffold on which the AMPK complex assembles, via its C-terminus that bridges alpha (PRKAA1 or PRKAA2) and gamma subunits (PRKAG1, PRKAG2 or PRKAG3). This chain is 5'-AMP-activated protein kinase subunit beta-1 (PRKAB1), found in Bos taurus (Bovine).